Reading from the N-terminus, the 205-residue chain is HTH-type transcriptional regulator PksA (205 aa).

In terms of domain architecture, HTH tetR-type spans 8–68 (EKRRKQIAEA…FAMKLVQEKV (61 aa)). The H-T-H motif DNA-binding region spans 31–50 (SARNIAKEAGLSLGALRHYF).

In terms of biological role, transcriptional regulation of the polyketide synthase operon. This is HTH-type transcriptional regulator PksA (pksA) from Bacillus subtilis (strain 168).